The following is a 228-amino-acid chain: ATP-dependent dethiobiotin synthetase BioD (228 aa).

12-17 serves as a coordination point for ATP; it reads EIGKTT. Thr-16 lines the Mg(2+) pocket. Residue Lys-37 is part of the active site. Ser-41 lines the substrate pocket. ATP is bound by residues Asp-54, 116-119, and 205-207; these read EGAG and PRL. Mg(2+)-binding residues include Asp-54 and Glu-116.

It belongs to the dethiobiotin synthetase family. Homodimer. Mg(2+) serves as cofactor.

It localises to the cytoplasm. It carries out the reaction (7R,8S)-7,8-diammoniononanoate + CO2 + ATP = (4R,5S)-dethiobiotin + ADP + phosphate + 3 H(+). It functions in the pathway cofactor biosynthesis; biotin biosynthesis; biotin from 7,8-diaminononanoate: step 1/2. In terms of biological role, catalyzes a mechanistically unusual reaction, the ATP-dependent insertion of CO2 between the N7 and N8 nitrogen atoms of 7,8-diaminopelargonic acid (DAPA, also called 7,8-diammoniononanoate) to form a ureido ring. The sequence is that of ATP-dependent dethiobiotin synthetase BioD from Pseudomonas paraeruginosa (strain DSM 24068 / PA7) (Pseudomonas aeruginosa (strain PA7)).